The chain runs to 583 residues: Ankyrin repeat and SOCS box protein 15 (583 aa).

ANK repeat units lie at residues 75-104 (KGWF…KTLW), 110-139 (DGET…WPNT), 143-172 (KGET…SLDQ), 176-205 (KRWS…NVHL), 209-238 (FGVT…DVFA), 242-271 (DGAS…SGNV), 275-304 (AGHL…KHAI), 307-336 (SGLT…DVNA), 349-378 (ERKT…DPNL), 379-408 (DPLN…NVNC), and 416-444 (TRFP…QVEL). An SOCS box domain is found at 524–579 (WPEIRQIIENPCSLKHLCRLKIRRVMGLQRLCQPASIQMLPLPAAMRRYLLFKEFD).

It belongs to the ankyrin SOCS box (ASB) family.

The protein operates within protein modification; protein ubiquitination. Functionally, may be a substrate-recognition component of a SCF-like ECS (Elongin-Cullin-SOCS-box protein) E3 ubiquitin-protein ligase complex which mediates the ubiquitination and subsequent proteasomal degradation of target proteins. The protein is Ankyrin repeat and SOCS box protein 15 (Asb15) of Mus musculus (Mouse).